A 622-amino-acid polypeptide reads, in one-letter code: FERM domain-containing protein 6 (622 aa).

The 313-residue stretch at 16–328 folds into the FERM domain; that stretch reads RSVCIFLPND…NSHRLYMNLQ (313 aa). The interval 364 to 445 is disordered; it reads KRSRASGSSA…SGVESGGKDR (82 aa). Low complexity-rich tracts occupy residues 384 to 395 and 425 to 438; these read HSTASHSSSHTS and SSMT…TSGV. At S522 the chain carries Phosphoserine. T523 is subject to Phosphothreonine. A phosphoserine mark is found at S525, S542, and S544.

It is found in the cytoplasm. Its subcellular location is the cell membrane. This chain is FERM domain-containing protein 6 (FRMD6), found in Homo sapiens (Human).